Reading from the N-terminus, the 141-residue chain is Hemoglobin subunit alpha-A (141 aa).

The Globin domain maps to 1 to 141; it reads VLNAGDKANV…VGTVLTSKYR (141 aa). H58 lines the O2 pocket. Position 87 (H87) interacts with heme b.

Belongs to the globin family. Heterotetramer of two alpha chains and two beta chains. Red blood cells.

Functionally, involved in oxygen transport from the lung to the various peripheral tissues. The protein is Hemoglobin subunit alpha-A (HBAA) of Chrysemys picta bellii (Western painted turtle).